The primary structure comprises 840 residues: Heat shock 70 kDa protein 4 (840 aa).

Lysine 53 carries the N6-acetyllysine modification. Serine 76 carries the phosphoserine modification. A phosphotyrosine mark is found at tyrosine 89 and tyrosine 336. Phosphoserine occurs at positions 393 and 415. An N6-acetyllysine modification is found at lysine 430. The tract at residues 506–575 (NEEPMETDQN…QAKKAKVKTS (70 aa)) is disordered. The span at 514 to 533 (QNAKEEEKMQVDQEEPHAEE) shows a compositional bias: basic and acidic residues. Threonine 538 is modified (phosphothreonine). A phosphoserine mark is found at serine 546 and serine 647. Tyrosine 660 carries the phosphotyrosine modification. At lysine 679 the chain carries N6-acetyllysine. Position 756 is a phosphoserine (serine 756). Lysine 773 is subject to N6-methyllysine. The tract at residues 782–840 (IISKPKPKVEPPKEEQKNAEQNGPVDGQGDSPGPQAAEQGTDTAVPSDSDKKLPEMDID) is disordered. 2 stretches are compositionally biased toward basic and acidic residues: residues 788–799 (PKVEPPKEEQKN) and 829–840 (DSDKKLPEMDID).

It belongs to the heat shock protein 70 family. As to quaternary structure, interacts with TJP1/ZO-1.

The protein resides in the cytoplasm. The protein is Heat shock 70 kDa protein 4 (HSPA4) of Canis lupus familiaris (Dog).